The following is a 238-amino-acid chain: UPF0328 protein ECU07_0010 (238 aa).

Disordered regions lie at residues 1-154 (MAAP…NTQR) and 211-238 (GRLH…LATL). The span at 106–128 (HTEGCHTHEANPEPNTKHTETES) shows a compositional bias: basic and acidic residues. Positions 129 to 152 (PKPQTSTQHHTPITIPSSLLSQNT) are enriched in polar residues.

The protein belongs to the UPF0328 family.

The chain is UPF0328 protein ECU07_0010 from Encephalitozoon cuniculi (strain GB-M1) (Microsporidian parasite).